The primary structure comprises 504 residues: Ribose import ATP-binding protein RbsA 3 (504 aa).

ABC transporter domains are found at residues 6 to 238 and 251 to 494; these read ANLK…VGRP and IGAE…MMGG. 38 to 45 serves as a coordination point for ATP; the sequence is GENGAGKS.

This sequence belongs to the ABC transporter superfamily. Ribose importer (TC 3.A.1.2.1) family. The complex is composed of an ATP-binding protein (RbsA), two transmembrane proteins (RbsC) and a solute-binding protein (RbsB).

Its subcellular location is the cell inner membrane. The catalysed reaction is D-ribose(out) + ATP + H2O = D-ribose(in) + ADP + phosphate + H(+). Its function is as follows. Part of the ABC transporter complex RbsABC involved in ribose import. Responsible for energy coupling to the transport system. This Rhizobium meliloti (strain 1021) (Ensifer meliloti) protein is Ribose import ATP-binding protein RbsA 3.